The chain runs to 237 residues: NAD(P)H-quinone oxidoreductase subunit K (237 aa).

Positions 52, 53, 117, and 148 each coordinate [4Fe-4S] cluster.

This sequence belongs to the complex I 20 kDa subunit family. As to quaternary structure, NDH-1 can be composed of about 15 different subunits; different subcomplexes with different compositions have been identified which probably have different functions. Requires [4Fe-4S] cluster as cofactor.

It localises to the cellular thylakoid membrane. It carries out the reaction a plastoquinone + NADH + (n+1) H(+)(in) = a plastoquinol + NAD(+) + n H(+)(out). It catalyses the reaction a plastoquinone + NADPH + (n+1) H(+)(in) = a plastoquinol + NADP(+) + n H(+)(out). Functionally, NDH-1 shuttles electrons from an unknown electron donor, via FMN and iron-sulfur (Fe-S) centers, to quinones in the respiratory and/or the photosynthetic chain. The immediate electron acceptor for the enzyme in this species is believed to be plastoquinone. Couples the redox reaction to proton translocation, and thus conserves the redox energy in a proton gradient. Cyanobacterial NDH-1 also plays a role in inorganic carbon-concentration. The protein is NAD(P)H-quinone oxidoreductase subunit K of Thermosynechococcus vestitus (strain NIES-2133 / IAM M-273 / BP-1).